The following is a 142-amino-acid chain: Large ribosomal subunit protein uL13 (142 aa).

It belongs to the universal ribosomal protein uL13 family. Part of the 50S ribosomal subunit.

This protein is one of the early assembly proteins of the 50S ribosomal subunit, although it is not seen to bind rRNA by itself. It is important during the early stages of 50S assembly. This chain is Large ribosomal subunit protein uL13, found in Burkholderia cenocepacia (strain ATCC BAA-245 / DSM 16553 / LMG 16656 / NCTC 13227 / J2315 / CF5610) (Burkholderia cepacia (strain J2315)).